A 1217-amino-acid polypeptide reads, in one-letter code: DNA-directed RNA polymerase subunit beta' (1217 aa).

The Zn(2+) site is built by Cys60, Cys62, Cys75, and Cys78. Mg(2+)-binding residues include Asp449, Asp451, and Asp453. Residues Cys821, Cys895, Cys902, and Cys905 each contribute to the Zn(2+) site.

It belongs to the RNA polymerase beta' chain family. In terms of assembly, the RNAP catalytic core consists of 2 alpha, 1 beta, 1 beta' and 1 omega subunit. When a sigma factor is associated with the core the holoenzyme is formed, which can initiate transcription. It depends on Mg(2+) as a cofactor. The cofactor is Zn(2+).

It carries out the reaction RNA(n) + a ribonucleoside 5'-triphosphate = RNA(n+1) + diphosphate. DNA-dependent RNA polymerase catalyzes the transcription of DNA into RNA using the four ribonucleoside triphosphates as substrates. The protein is DNA-directed RNA polymerase subunit beta' of Lactobacillus acidophilus (strain ATCC 700396 / NCK56 / N2 / NCFM).